The sequence spans 745 residues: 5-methyltetrahydropteroyltriglutamate--homocysteine methyltransferase (745 aa).

Residues 19-22 (RELK) and lysine 119 contribute to the 5-methyltetrahydropteroyltri-L-glutamate site. Residues 418-420 (IGS) and glutamate 471 contribute to the L-homocysteine site. Residues 418–420 (IGS) and glutamate 471 each bind L-methionine. 5-methyltetrahydropteroyltri-L-glutamate contacts are provided by residues 502–503 (RC) and tryptophan 548. Aspartate 586 lines the L-homocysteine pocket. Aspartate 586 lines the L-methionine pocket. Glutamate 592 lines the 5-methyltetrahydropteroyltri-L-glutamate pocket. Histidine 628, cysteine 630, and glutamate 652 together coordinate Zn(2+). Histidine 681 (proton donor) is an active-site residue. Cysteine 713 contributes to the Zn(2+) binding site.

Belongs to the vitamin-B12 independent methionine synthase family. It depends on Zn(2+) as a cofactor.

The catalysed reaction is 5-methyltetrahydropteroyltri-L-glutamate + L-homocysteine = tetrahydropteroyltri-L-glutamate + L-methionine. The protein operates within amino-acid biosynthesis; L-methionine biosynthesis via de novo pathway; L-methionine from L-homocysteine (MetE route): step 1/1. Catalyzes the transfer of a methyl group from 5-methyltetrahydrofolate to homocysteine resulting in methionine formation. This Corynebacterium glutamicum (strain ATCC 13032 / DSM 20300 / JCM 1318 / BCRC 11384 / CCUG 27702 / LMG 3730 / NBRC 12168 / NCIMB 10025 / NRRL B-2784 / 534) protein is 5-methyltetrahydropteroyltriglutamate--homocysteine methyltransferase.